The chain runs to 62 residues: uncharacterized protein (62 aa).

The span at 1–13 (MGESKSPQESSSE) shows a compositional bias: polar residues. The interval 1 to 62 (MGESKSPQES…SRREFRRKSG (62 aa)) is disordered. Residues 14–28 (GETKRKFREALDRKM) show a composition bias toward basic and acidic residues.

This is an uncharacterized protein from Mycobacterium tuberculosis (strain ATCC 25618 / H37Rv).